A 490-amino-acid chain; its full sequence is Protein nucleotidyltransferase YdiU (490 aa).

Residues glycine 86, glycine 88, arginine 89, lysine 109, aspartate 121, glycine 122, arginine 172, and arginine 179 each contribute to the ATP site. The active-site Proton acceptor is aspartate 248. Asparagine 249 and aspartate 258 together coordinate Mg(2+). An ATP-binding site is contributed by aspartate 258.

The protein belongs to the SELO family. It depends on Mg(2+) as a cofactor. Mn(2+) serves as cofactor.

It catalyses the reaction L-seryl-[protein] + ATP = 3-O-(5'-adenylyl)-L-seryl-[protein] + diphosphate. It carries out the reaction L-threonyl-[protein] + ATP = 3-O-(5'-adenylyl)-L-threonyl-[protein] + diphosphate. The catalysed reaction is L-tyrosyl-[protein] + ATP = O-(5'-adenylyl)-L-tyrosyl-[protein] + diphosphate. The enzyme catalyses L-histidyl-[protein] + UTP = N(tele)-(5'-uridylyl)-L-histidyl-[protein] + diphosphate. It catalyses the reaction L-seryl-[protein] + UTP = O-(5'-uridylyl)-L-seryl-[protein] + diphosphate. It carries out the reaction L-tyrosyl-[protein] + UTP = O-(5'-uridylyl)-L-tyrosyl-[protein] + diphosphate. Functionally, nucleotidyltransferase involved in the post-translational modification of proteins. It can catalyze the addition of adenosine monophosphate (AMP) or uridine monophosphate (UMP) to a protein, resulting in modifications known as AMPylation and UMPylation. In Rhizobium meliloti (strain 1021) (Ensifer meliloti), this protein is Protein nucleotidyltransferase YdiU.